A 336-amino-acid polypeptide reads, in one-letter code: UDP-3-O-acylglucosamine N-acyltransferase (336 aa).

Histidine 233 (proton acceptor) is an active-site residue.

It belongs to the transferase hexapeptide repeat family. LpxD subfamily. In terms of assembly, homotrimer.

It carries out the reaction a UDP-3-O-[(3R)-3-hydroxyacyl]-alpha-D-glucosamine + a (3R)-hydroxyacyl-[ACP] = a UDP-2-N,3-O-bis[(3R)-3-hydroxyacyl]-alpha-D-glucosamine + holo-[ACP] + H(+). It functions in the pathway bacterial outer membrane biogenesis; LPS lipid A biosynthesis. Functionally, catalyzes the N-acylation of UDP-3-O-acylglucosamine using 3-hydroxyacyl-ACP as the acyl donor. Is involved in the biosynthesis of lipid A, a phosphorylated glycolipid that anchors the lipopolysaccharide to the outer membrane of the cell. This Helicobacter pylori (strain HPAG1) protein is UDP-3-O-acylglucosamine N-acyltransferase.